We begin with the raw amino-acid sequence, 165 residues long: Choriogonadotropin subunit beta 7 (165 aa).

An N-terminal signal peptide occupies residues 1–20; the sequence is MEMFQGLLLLLLLSMGGTWA. 6 disulfides stabilise this stretch: C29–C77, C43–C92, C46–C130, C54–C108, C58–C110, and C113–C120. N33 and N50 each carry an N-linked (GlcNAc...) asparagine glycan. The segment at 131–165 is disordered; the sequence is DDPRFQASSSSKAPPPSLPSPSRLPGPSDTPILPQ. 4 O-linked (GalNAc...) serine glycosylation sites follow: S141, S147, S152, and S158. Residues 143–154 show a composition bias toward pro residues; it reads APPPSLPSPSRL.

Belongs to the glycoprotein hormones subunit beta family. In terms of assembly, heterodimer of a common alpha chain identical in LH, FSH, TSH and HCG and a unique beta chain distinct in each of the hormones and confers receptor and biological specificity. In terms of tissue distribution, high expression in the placenta throughout pregnancy.

It is found in the secreted. Functionally, beta subunit of the human chorionic gonadotropin (hCG). hCG is a complex glycoprotein composed of two glycosylated subunits alpha and beta which are non-covalently associated. The alpha subunit is identical to those in the pituitary gonadotropin hormones (LH, FSH and TSH). The beta subunits are distinct in each of the hormones and confer receptor and biological specificity. Has an essential role for pregnancy and maternal adaptation. Stimulates the ovaries to synthesize the steroids that are essential for the maintenance of pregnancy. The chain is Choriogonadotropin subunit beta 7 from Homo sapiens (Human).